The following is an 875-amino-acid chain: Ubiquitin-protein ligase E3A (875 aa).

Residues 44–83 (CGNEACTNEFCASCPTFLRMDNNAAAIKALELYKINAKLC) form a C4-type; atypical zinc finger. A compositionally biased stretch (basic and acidic residues) spans 175 to 186 (KEELKSLQAKDE). Residues 175 to 226 (KEELKSLQAKDEDKDEDEKEKAACSAAAMEEDSEASSSRIGDSSQGDNNLQK) are disordered. A compositionally biased stretch (polar residues) spans 213-225 (RIGDSSQGDNNLQ). S218 is subject to Phosphoserine. The segment at 401–418 (IPESSELTLQELLGEERR) is E6-binding. The interval 418-517 (RNKKGPRVDP…TVLYSLVQGQ (100 aa)) is interaction with HCV core protein. Phosphotyrosine; by ABL1 is present on Y659. The 100-residue stretch at 776–875 (YDGGYTRDSV…ITYAKGFGML (100 aa)) folds into the HECT domain. Catalysis depends on C843, which acts as the Glycyl thioester intermediate.

The active form is probably a homotrimer. Binds UBQLN1 and UBQLN2. Interacts with the 26S proteasome. Interacts with BPY2. Interacts with HIF1AN, MAPK6 and NEURL4; interaction with MAPK6 may be mediated by NEURL4. Interacts with the proteasomal subunit PSMD4. Interacts with ESR1 and WBP2. Interacts with BMAL1. Interacts with ARC. As to quaternary structure, (Microbial infection) Interacts with HCV core protein and targets it to degradation. In terms of assembly, (Microbial infection) Interacts with the E6 protein of the cancer-associated human papillomavirus types 16 and 18. The E6/E6-AP complex binds to and targets the p53/TP53 tumor-suppressor protein for ubiquitin-mediated proteolysis. Phosphorylation at Tyr-659 by ABL1 impairs E3 ligase activity and protects p53/TP53 from degradation in (HPV)-infected cells.

The protein resides in the cytoplasm. It is found in the nucleus. The enzyme catalyses S-ubiquitinyl-[E2 ubiquitin-conjugating enzyme]-L-cysteine + [acceptor protein]-L-lysine = [E2 ubiquitin-conjugating enzyme]-L-cysteine + N(6)-ubiquitinyl-[acceptor protein]-L-lysine.. The protein operates within protein modification; protein ubiquitination. Its function is as follows. E3 ubiquitin-protein ligase which accepts ubiquitin from an E2 ubiquitin-conjugating enzyme in the form of a thioester and transfers it to its substrates. Several substrates have been identified including the BMAL1, ARC, LAMTOR1, RAD23A and RAD23B, MCM7 (which is involved in DNA replication), annexin A1, the PML tumor suppressor, and the cell cycle regulator CDKN1B. Additionally, may function as a cellular quality control ubiquitin ligase by helping the degradation of the cytoplasmic misfolded proteins. Finally, UBE3A also promotes its own degradation in vivo. Plays an important role in the regulation of the circadian clock: involved in the ubiquitination of the core clock component BMAL1, leading to its proteasomal degradation. Acts as transcriptional coactivator of progesterone receptor PGR upon progesterone hormone activation. Acts as a regulator of synaptic development by mediating ubiquitination and degradation of ARC. Required for synaptic remodeling in neurons by mediating ubiquitination and degradation of LAMTOR1, thereby limiting mTORC1 signaling and activity-dependent synaptic remodeling. Synergizes with WBP2 in enhancing PGR activity. Functionally, (Microbial infection) Catalyzes the high-risk human papilloma virus E6-mediated ubiquitination of p53/TP53, contributing to the neoplastic progression of cells infected by these viruses. The sequence is that of Ubiquitin-protein ligase E3A from Homo sapiens (Human).